The following is a 141-amino-acid chain: Large ribosomal subunit protein uL11 (141 aa).

The protein belongs to the universal ribosomal protein uL11 family. As to quaternary structure, part of the ribosomal stalk of the 50S ribosomal subunit. Interacts with L10 and the large rRNA to form the base of the stalk. L10 forms an elongated spine to which L12 dimers bind in a sequential fashion forming a multimeric L10(L12)X complex. One or more lysine residues are methylated.

Its function is as follows. Forms part of the ribosomal stalk which helps the ribosome interact with GTP-bound translation factors. The sequence is that of Large ribosomal subunit protein uL11 from Roseiflexus castenholzii (strain DSM 13941 / HLO8).